We begin with the raw amino-acid sequence, 255 residues long: Ribonuclease HII (255 aa).

In terms of domain architecture, RNase H type-2 spans 72–255 (AIICGIDEVG…KSFEPIKSLL (184 aa)). 3 residues coordinate a divalent metal cation: D78, E79, and D170.

This sequence belongs to the RNase HII family. It depends on Mn(2+) as a cofactor. The cofactor is Mg(2+).

Its subcellular location is the cytoplasm. It catalyses the reaction Endonucleolytic cleavage to 5'-phosphomonoester.. In terms of biological role, endonuclease that specifically degrades the RNA of RNA-DNA hybrids. The protein is Ribonuclease HII of Staphylococcus aureus (strain USA300).